Here is a 355-residue protein sequence, read N- to C-terminus: Phosphoribosylformylglycinamidine cyclo-ligase (355 aa).

The protein belongs to the AIR synthase family.

The protein resides in the cytoplasm. It catalyses the reaction 2-formamido-N(1)-(5-O-phospho-beta-D-ribosyl)acetamidine + ATP = 5-amino-1-(5-phospho-beta-D-ribosyl)imidazole + ADP + phosphate + H(+). It participates in purine metabolism; IMP biosynthesis via de novo pathway; 5-amino-1-(5-phospho-D-ribosyl)imidazole from N(2)-formyl-N(1)-(5-phospho-D-ribosyl)glycinamide: step 2/2. The sequence is that of Phosphoribosylformylglycinamidine cyclo-ligase from Hamiltonella defensa subsp. Acyrthosiphon pisum (strain 5AT).